Reading from the N-terminus, the 461-residue chain is Asparagine--tRNA ligase (461 aa).

This sequence belongs to the class-II aminoacyl-tRNA synthetase family. In terms of assembly, homodimer.

The protein localises to the cytoplasm. The catalysed reaction is tRNA(Asn) + L-asparagine + ATP = L-asparaginyl-tRNA(Asn) + AMP + diphosphate + H(+). In Solibacter usitatus (strain Ellin6076), this protein is Asparagine--tRNA ligase.